The chain runs to 232 residues: Anthranilate synthase component 2 (232 aa).

The Glutamine amidotransferase type-1 domain occupies 2-198 (RILVVDNYDS…LTCCGWTQDD (197 aa)). 55–57 (GPG) provides a ligand contact to L-glutamine. Catalysis depends on C83, which acts as the Nucleophile; for GATase activity. L-glutamine contacts are provided by residues Q87 and 133–134 (SL). Active-site for GATase activity residues include H172 and E174.

As to quaternary structure, heterotetramer consisting of two non-identical subunits: a beta subunit (TrpG) and a large alpha subunit (TrpE).

It carries out the reaction chorismate + L-glutamine = anthranilate + pyruvate + L-glutamate + H(+). Its pathway is amino-acid biosynthesis; L-tryptophan biosynthesis; L-tryptophan from chorismate: step 1/5. Part of a heterotetrameric complex that catalyzes the two-step biosynthesis of anthranilate, an intermediate in the biosynthesis of L-tryptophan. In the first step, the glutamine-binding beta subunit (TrpG) of anthranilate synthase (AS) provides the glutamine amidotransferase activity which generates ammonia as a substrate that, along with chorismate, is used in the second step, catalyzed by the large alpha subunit of AS (TrpE) to produce anthranilate. In the absence of TrpG, TrpE can synthesize anthranilate directly from chorismate and high concentrations of ammonia. This Mycobacterium tuberculosis (strain CDC 1551 / Oshkosh) protein is Anthranilate synthase component 2 (trpG).